A 218-amino-acid chain; its full sequence is Ras-related protein Rab-11B (218 aa).

Glycine 2 bears the N-acetylglycine mark. A Citrulline modification is found at arginine 4. Residues serine 20, glycine 21, glycine 23, lysine 24, serine 25, asparagine 26, asparagine 37, leucine 38, serine 40, serine 42, and threonine 43 each coordinate GTP. Serine 25 is a binding site for Mg(2+). Residues 36-47 (FNLESKSTIGVE) carry the Switch 1 motif. 2 residues coordinate Mg(2+): threonine 43 and aspartate 66. The Switch 2 motif lies at 67–86 (TAGQERYRAITSAYYRGAVG). Positions 69, 124, 125, 127, 155, and 156 each coordinate GTP. The interval 184–218 (RAAHDESPGNNVVDISVPPTTDGQRPNKLQCCQSL) is disordered. Residues cysteine 214 and cysteine 215 are each lipidated (S-geranylgeranyl cysteine). Cysteine 215 bears the Cysteine methyl ester mark. Residues 216–218 (QSL) constitute a propeptide, removed in mature form.

Belongs to the small GTPase superfamily. Rab family. Interacts with KCNMA1. Interacts with RAB11FIP1, RAB11FIP2, RAB11FIP3 and RAB11FIP4. May interact with TBC1D14. Interacts with ATP6V1E1. Interacts with PI4KB. Interacts (GDP-bound form) with ZFYVE27. Interacts (GDP-bound form) with KIF5A in a ZFYVE27-dependent manner. Interacts with RELCH. Interacts (in GTP-bound form) with TBC1D8B (via domain Rab-GAP TBC). Forms a complex containing RAB11B, ASAP1, Rabin8/RAB3IP, RAP11FIP3 and ARF4. Interacts with WDR44. Requires Mg(2+) as cofactor. Citrullinated by PADI4. In terms of tissue distribution, abundantly expressed in brain, heart and testis. Also detected in kidney and pancreatic islets.

It localises to the recycling endosome membrane. It is found in the cytoplasmic vesicle. Its subcellular location is the secretory vesicle. The protein localises to the synaptic vesicle membrane. The protein resides in the phagosome membrane. The catalysed reaction is GTP + H2O = GDP + phosphate + H(+). Regulated by guanine nucleotide exchange factors (GEFs) which promote the exchange of bound GDP for free GTP. Regulated by GTPase activating proteins (GAPs) which increase the GTP hydrolysis activity. Inhibited by GDP dissociation inhibitors (GDIs) which prevent Rab-GDP dissociation. In terms of biological role, the small GTPases Rab are key regulators of intracellular membrane trafficking, from the formation of transport vesicles to their fusion with membranes. Rabs cycle between an inactive GDP-bound form and an active GTP-bound form that is able to recruit to membranes different set of downstream effectors directly responsible for vesicle formation, movement, tethering and fusion. The small Rab GTPase RAB11B plays a role in endocytic recycling, regulating apical recycling of several transmembrane proteins including cystic fibrosis transmembrane conductance regulator/CFTR, epithelial sodium channel/ENaC, potassium voltage-gated channel, and voltage-dependent L-type calcium channel. May also regulate constitutive and regulated secretion, like insulin granule exocytosis. Required for melanosome transport and release from melanocytes. Also regulates V-ATPase intracellular transport in response to extracellular acidosis. Promotes Rabin8/RAB3IP preciliary vesicular trafficking to mother centriole by forming a ciliary targeting complex containing Rab11, ASAP1, Rabin8/RAB3IP, RAB11FIP3 and ARF4, thereby regulating ciliogenesis initiation. On the contrary, upon LPAR1 receptor signaling pathway activation, interaction with phosphorylated WDR44 prevents Rab11-RAB3IP-RAB11FIP3 complex formation and cilia growth. This is Ras-related protein Rab-11B from Mus musculus (Mouse).